A 351-amino-acid polypeptide reads, in one-letter code: Spindolin (351 aa).

Positions 1–20 (MNKFYYICIYINILYVCVSG) are cleaved as a signal peptide.

Homodimer; disulfide-linked.

This protein is a spindle body protein. This Lepidoptera (butterflies and moths) protein is Spindolin.